The chain runs to 418 residues: Geranylgeranyl pyrophosphate synthase (418 aa).

Over residues 51-64 (TSSTGIPTSLNATP) the composition is skewed to polar residues. The disordered stretch occupies residues 51-73 (TSSTGIPTSLNATPTKPVLRPVP). Isopentenyl diphosphate is bound by residues lysine 143, arginine 146, and histidine 175. Aspartate 182 and aspartate 186 together coordinate Mg(2+). Dimethylallyl diphosphate is bound at residue arginine 191. Isopentenyl diphosphate is bound at residue arginine 192. The dimethylallyl diphosphate site is built by lysine 269, threonine 270, glutamine 305, lysine 322, and lysine 332.

Belongs to the FPP/GGPP synthase family. It depends on Mg(2+) as a cofactor.

The protein localises to the cytoplasm. It catalyses the reaction isopentenyl diphosphate + dimethylallyl diphosphate = (2E)-geranyl diphosphate + diphosphate. It carries out the reaction isopentenyl diphosphate + (2E)-geranyl diphosphate = (2E,6E)-farnesyl diphosphate + diphosphate. The enzyme catalyses isopentenyl diphosphate + (2E,6E)-farnesyl diphosphate = (2E,6E,10E)-geranylgeranyl diphosphate + diphosphate. Its pathway is isoprenoid biosynthesis; farnesyl diphosphate biosynthesis; farnesyl diphosphate from geranyl diphosphate and isopentenyl diphosphate: step 1/1. It functions in the pathway isoprenoid biosynthesis; geranyl diphosphate biosynthesis; geranyl diphosphate from dimethylallyl diphosphate and isopentenyl diphosphate: step 1/1. The protein operates within isoprenoid biosynthesis; geranylgeranyl diphosphate biosynthesis; geranylgeranyl diphosphate from farnesyl diphosphate and isopentenyl diphosphate: step 1/1. Functionally, catalyzes the trans-addition of the three molecules of IPP onto DMAPP to form geranylgeranyl pyrophosphate. The chain is Geranylgeranyl pyrophosphate synthase (GGS) from Fusarium fujikuroi (Bakanae and foot rot disease fungus).